The following is a 214-amino-acid chain: tRNA (guanine-N(7)-)-methyltransferase (214 aa).

Residues E43, E68, D95, and D117 each coordinate S-adenosyl-L-methionine. D117 is a catalytic residue. Residues K121, D153, and 190–193 contribute to the substrate site; that span reads TEYE.

This sequence belongs to the class I-like SAM-binding methyltransferase superfamily. TrmB family.

It catalyses the reaction guanosine(46) in tRNA + S-adenosyl-L-methionine = N(7)-methylguanosine(46) in tRNA + S-adenosyl-L-homocysteine. It participates in tRNA modification; N(7)-methylguanine-tRNA biosynthesis. Its function is as follows. Catalyzes the formation of N(7)-methylguanine at position 46 (m7G46) in tRNA. This Staphylococcus aureus (strain JH1) protein is tRNA (guanine-N(7)-)-methyltransferase.